The chain runs to 257 residues: MPLLCADIGNSHTVLGLVSGGSVLADWRVATDERNTADDWSVLLRGLLGAALEEIDGIAVCATVPAVLHEWREMLTRHFPAVRHVVVEPGVRTGVPVLMDNPREVGTDRIINALAAVHEYGGPAIVVDFGGTATTFDVVSAQGQYVGGSISPGIELSLESLGRRGAQLRKVELLRPRSVIAKNTVEALQSGMVFGVAAQVEGIVDRMIGELGVGATDVQVIATGYLAPVVLDECRCFTHHAPWLTLRGLELVFERNA.

7 to 14 serves as a coordination point for ATP; that stretch reads DIGNSHTV. 106-109 is a binding site for substrate; it reads GTDR. Catalysis depends on Asp-108, which acts as the Proton acceptor. Position 128 (Asp-128) interacts with K(+). Thr-132 lines the ATP pocket. Thr-184 is a substrate binding site.

It belongs to the type III pantothenate kinase family. As to quaternary structure, homodimer. It depends on NH4(+) as a cofactor. Requires K(+) as cofactor.

The protein localises to the cytoplasm. The enzyme catalyses (R)-pantothenate + ATP = (R)-4'-phosphopantothenate + ADP + H(+). It participates in cofactor biosynthesis; coenzyme A biosynthesis; CoA from (R)-pantothenate: step 1/5. Its function is as follows. Catalyzes the phosphorylation of pantothenate (Pan), the first step in CoA biosynthesis. In Nocardioides sp. (strain ATCC BAA-499 / JS614), this protein is Type III pantothenate kinase.